We begin with the raw amino-acid sequence, 717 residues long: SUN domain-containing protein 2 (717 aa).

The interval 1-66 (MSRRSQRLTR…PQLGPSSDAH (66 aa)) is disordered. Residues 1–139 (MSRRSQRLTR…SSSGYSSEDD (139 aa)) are LMNA-binding. At 1-212 (MSRRSQRLTR…LTRRFSSLKT (212 aa)) the chain is on the nuclear side. The residue at position 12 (serine 12) is a Phosphoserine. Positions 19-32 (SSSSGGSSVAGSQS) are enriched in low complexity. Phosphoserine occurs at positions 38 and 54. Phosphothreonine is present on threonine 107. A phosphoserine mark is found at serine 110, serine 113, serine 116, and serine 136. A helical transmembrane segment spans residues 213–233 (FLWFLLPLLLLTCLTYGAWYF). The Perinuclear space portion of the chain corresponds to 234–717 (YPYGLQTFHP…RFRVHGEPAH (484 aa)). 3 coiled-coil regions span residues 273 to 296 (EQRVMSRVHSLERRLEALAAEFSS), 348 to 440 (RRET…EEVG), and 475 to 506 (LLQREEMQAQLRELESKILTHVAEMQGKSARE). The tract at residues 507-717 (AAASLSLTLQ…RFRVHGEPAH (211 aa)) is sufficient for interaction with SYNE1 and SYNE2. An SUN domain is found at 555 to 716 (GASVISTRCS…YRFRVHGEPA (162 aa)). Cysteine 601 and cysteine 705 are disulfide-bonded. Asparagine 636 carries an N-linked (GlcNAc...) asparagine glycan.

As to quaternary structure, core component of the LINC complex which is composed of inner nuclear membrane SUN domain-containing proteins coupled to outer nuclear membrane KASH domain-containing nesprins. SUN and KASH domain-containing proteins seem to bind each other promiscuously; however, differentially expression of LINC complex constituents is giving rise to specific assemblies. At least SUN1/2-containing core LINC complexes are proposed to be hexameric composed of three protomers of each KASH and SUN domain-containing protein. Interacts with SYNE2; the SUN2:SYNE2/KASH2 LINC complex is a heterohexamer; the homotrimeric cloverleave-like conformation of the SUN domain is a prerequisite for LINC complex formation in which three separate SYNE2/KASH2 peptides bind at the interface of adjacent SUN domains. Component of a probable SUN2:KASH5 LINC complex. Interacts with SYNE1 and SYNE3; probably forming respective LINC complexes. Interacts with A-type lamin. Interaction with lamins B1 and C is hardly detectable. Interacts with EMD and RAB5A. Interacts with TMEM43. Interacts with TMEM201. In terms of processing, the disulfide bond with SYNE2 is required for stability of the SUN2:SYNE2/KASH2 LINC complex under tensile forces though not required for the interaction. The disulfide bond is proposed to be conserved in LINC complexes involved in force transmission. In terms of tissue distribution, widely expressed. Highly expressed in heart, lung and muscle. Weakly expressed in fetal heart. Slightly overexpressed in some heart tissues form patients with congenital heart defects.

The protein resides in the nucleus inner membrane. It localises to the nucleus envelope. The protein localises to the endosome membrane. In terms of biological role, as a component of the LINC (LInker of Nucleoskeleton and Cytoskeleton) complex, involved in the connection between the nuclear lamina and the cytoskeleton. The nucleocytoplasmic interactions established by the LINC complex play an important role in the transmission of mechanical forces across the nuclear envelope and in nuclear movement and positioning. Specifically, SYNE2 and SUN2 assemble in arrays of transmembrane actin-associated nuclear (TAN) lines which are bound to F-actin cables and couple the nucleus to retrograde actin flow during actin-dependent nuclear movement. Required for interkinetic nuclear migration (INM) and essential for nucleokinesis and centrosome-nucleus coupling during radial neuronal migration in the cerebral cortex and during glial migration. Required for nuclear migration in retinal photoreceptor progenitors implicating association with cytoplasmic dynein-dynactin and kinesin motor complexes, and probably B-type lamins; SUN1 and SUN2 seem to act redundantly. The SUN1/2:KASH5 LINC complex couples telomeres to microtubules during meiosis; SUN1 and SUN2 seem to act at least partial redundantly. Anchors chromosome movement in the prophase of meiosis and is involved in selective gene expression of coding and non-coding RNAs needed for gametogenesis. Required for telomere attachment to nuclear envelope and gametogenesis. May also function on endocytic vesicles as a receptor for RAB5-GDP and participate in the activation of RAB5. The chain is SUN domain-containing protein 2 from Homo sapiens (Human).